Here is an 87-residue protein sequence, read N- to C-terminus: Large ribosomal subunit protein bL27 (87 aa).

The disordered stretch occupies residues 1–20; it reads MAHKKAGGSSRNGRDSESKR.

It belongs to the bacterial ribosomal protein bL27 family.

In Thiobacillus denitrificans (strain ATCC 25259 / T1), this protein is Large ribosomal subunit protein bL27.